We begin with the raw amino-acid sequence, 1589 residues long: Pentafunctional AROM polypeptide (1589 aa).

A 3-dehydroquinate synthase region spans residues 1 to 392; sequence MVKFEKVPIL…YGKSAHYVND (392 aa). Residues 43–45, 78–81, 109–111, and Asp-114 contribute to the NAD(+) site; these read DTN, EANK, and GGI. Arg-125 provides a ligand contact to 7-phospho-2-dehydro-3-deoxy-D-arabino-heptonate. 134 to 135 contacts NAD(+); the sequence is TS. Positions 141 and 147 each coordinate 7-phospho-2-dehydro-3-deoxy-D-arabino-heptonate. Lys-156 contributes to the NAD(+) binding site. Asn-157 is a 7-phospho-2-dehydro-3-deoxy-D-arabino-heptonate binding site. NAD(+)-binding positions include 174–177 and Asn-185; that span reads WLET. Glu-189 provides a ligand contact to Zn(2+). 7-phospho-2-dehydro-3-deoxy-D-arabino-heptonate contacts are provided by residues 189–192 and Lys-258; that span reads EVIK. Glu-268 acts as the Proton acceptor; for 3-dehydroquinate synthase activity in catalysis. 7-phospho-2-dehydro-3-deoxy-D-arabino-heptonate is bound by residues 272–276 and His-279; that span reads RNLLN. His-279 provides a ligand contact to Zn(2+). The Proton acceptor; for 3-dehydroquinate synthase activity role is filled by His-283. Residues His-295 and Lys-364 each coordinate 7-phospho-2-dehydro-3-deoxy-D-arabino-heptonate. His-295 lines the Zn(2+) pocket. Positions 405 to 872 are EPSP synthase; it reads VYPFSNIPQE…WDVLHTELGA (468 aa). The active-site For EPSP synthase activity is Cys-854. The tract at residues 891 to 1081 is shikimate kinase; it reads SVVLIGMRAA…VPNKRSAFVC (191 aa). 896 to 903 lines the ATP pocket; the sequence is GMRAAGKS. The interval 1082–1294 is 3-dehydroquinase; it reads LTFGDLTEKA…SAPGQLTLAQ (213 aa). His-1199 serves as the catalytic Proton acceptor; for 3-dehydroquinate dehydratase activity. Lys-1228 functions as the Schiff-base intermediate with substrate; for 3-dehydroquinate dehydratase activity in the catalytic mechanism. The shikimate dehydrogenase stretch occupies residues 1307-1589; that stretch reads SKKFFVVGNP…QEIFNAVTRD (283 aa).

In the N-terminal section; belongs to the sugar phosphate cyclases superfamily. Dehydroquinate synthase family. This sequence in the 2nd section; belongs to the EPSP synthase family. It in the 3rd section; belongs to the shikimate kinase family. The protein in the 4th section; belongs to the type-I 3-dehydroquinase family. In the C-terminal section; belongs to the shikimate dehydrogenase family. Homodimer. Zn(2+) serves as cofactor.

The protein localises to the cytoplasm. The catalysed reaction is 7-phospho-2-dehydro-3-deoxy-D-arabino-heptonate = 3-dehydroquinate + phosphate. It carries out the reaction 3-dehydroquinate = 3-dehydroshikimate + H2O. It catalyses the reaction shikimate + NADP(+) = 3-dehydroshikimate + NADPH + H(+). The enzyme catalyses shikimate + ATP = 3-phosphoshikimate + ADP + H(+). The catalysed reaction is 3-phosphoshikimate + phosphoenolpyruvate = 5-O-(1-carboxyvinyl)-3-phosphoshikimate + phosphate. Its pathway is metabolic intermediate biosynthesis; chorismate biosynthesis; chorismate from D-erythrose 4-phosphate and phosphoenolpyruvate: step 2/7. It functions in the pathway metabolic intermediate biosynthesis; chorismate biosynthesis; chorismate from D-erythrose 4-phosphate and phosphoenolpyruvate: step 3/7. The protein operates within metabolic intermediate biosynthesis; chorismate biosynthesis; chorismate from D-erythrose 4-phosphate and phosphoenolpyruvate: step 4/7. It participates in metabolic intermediate biosynthesis; chorismate biosynthesis; chorismate from D-erythrose 4-phosphate and phosphoenolpyruvate: step 5/7. Its pathway is metabolic intermediate biosynthesis; chorismate biosynthesis; chorismate from D-erythrose 4-phosphate and phosphoenolpyruvate: step 6/7. Functionally, the AROM polypeptide catalyzes 5 consecutive enzymatic reactions in prechorismate polyaromatic amino acid biosynthesis. The protein is Pentafunctional AROM polypeptide of Zygosaccharomyces rouxii (strain ATCC 2623 / CBS 732 / NBRC 1130 / NCYC 568 / NRRL Y-229).